The following is a 225-amino-acid chain: Ribosome maturation factor RimM (225 aa).

Residues Ala144–Tyr225 enclose the PRC barrel domain.

Belongs to the RimM family. Binds ribosomal protein uS19.

Its subcellular location is the cytoplasm. In terms of biological role, an accessory protein needed during the final step in the assembly of 30S ribosomal subunit, possibly for assembly of the head region. Essential for efficient processing of 16S rRNA. May be needed both before and after RbfA during the maturation of 16S rRNA. It has affinity for free ribosomal 30S subunits but not for 70S ribosomes. The chain is Ribosome maturation factor RimM from Burkholderia orbicola (strain MC0-3).